The primary structure comprises 180 residues: Acireductone dioxygenase (180 aa).

Positions 99, 101, 105, and 145 each coordinate Fe(2+). The Ni(2+) site is built by H99, H101, E105, and H145.

This sequence belongs to the acireductone dioxygenase (ARD) family. As to quaternary structure, monomer. The cofactor is Fe(2+). Ni(2+) serves as cofactor.

The catalysed reaction is 1,2-dihydroxy-5-(methylsulfanyl)pent-1-en-3-one + O2 = 3-(methylsulfanyl)propanoate + CO + formate + 2 H(+). It carries out the reaction 1,2-dihydroxy-5-(methylsulfanyl)pent-1-en-3-one + O2 = 4-methylsulfanyl-2-oxobutanoate + formate + 2 H(+). It functions in the pathway amino-acid biosynthesis; L-methionine biosynthesis via salvage pathway; L-methionine from S-methyl-5-thio-alpha-D-ribose 1-phosphate: step 5/6. In terms of biological role, catalyzes 2 different reactions between oxygen and the acireductone 1,2-dihydroxy-3-keto-5-methylthiopentene (DHK-MTPene) depending upon the metal bound in the active site. Fe-containing acireductone dioxygenase (Fe-ARD) produces formate and 2-keto-4-methylthiobutyrate (KMTB), the alpha-ketoacid precursor of methionine in the methionine recycle pathway. Ni-containing acireductone dioxygenase (Ni-ARD) produces methylthiopropionate, carbon monoxide and formate, and does not lie on the methionine recycle pathway. This chain is Acireductone dioxygenase, found in Geobacillus kaustophilus (strain HTA426).